Consider the following 654-residue polypeptide: Probable Xaa-Pro aminopeptidase P (654 aa).

Residues aspartate 449, aspartate 460, glutamate 558, and glutamate 572 each contribute to the Mn(2+) site.

It belongs to the peptidase M24B family. Requires Mn(2+) as cofactor.

It catalyses the reaction Release of any N-terminal amino acid, including proline, that is linked to proline, even from a dipeptide or tripeptide.. Catalyzes the removal of a penultimate prolyl residue from the N-termini of peptides. In Neosartorya fischeri (strain ATCC 1020 / DSM 3700 / CBS 544.65 / FGSC A1164 / JCM 1740 / NRRL 181 / WB 181) (Aspergillus fischerianus), this protein is Probable Xaa-Pro aminopeptidase P (ampp).